The chain runs to 635 residues: Threonine--tRNA ligase (635 aa).

Residues 1–152 (MQLLLIHSDY…AKAAVKPEAA (152 aa)) are editing domain. The interval 215–514 (PHVELMRRLE…TEEGKVPMLP (300 aa)) is catalytic. C307, H359, and H483 together coordinate Zn(2+).

Belongs to the class-II aminoacyl-tRNA synthetase family. As to quaternary structure, homodimer. Requires Zn(2+) as cofactor.

It localises to the cytoplasm. The catalysed reaction is tRNA(Thr) + L-threonine + ATP = L-threonyl-tRNA(Thr) + AMP + diphosphate + H(+). Functionally, catalyzes the attachment of threonine to tRNA(Thr) in a two-step reaction: L-threonine is first activated by ATP to form Thr-AMP and then transferred to the acceptor end of tRNA(Thr). Also edits incorrectly charged L-seryl-tRNA(Thr). The polypeptide is Threonine--tRNA ligase (Methanosarcina acetivorans (strain ATCC 35395 / DSM 2834 / JCM 12185 / C2A)).